The primary structure comprises 787 residues: PAN2-PAN3 deadenylation complex subunit pan3 (787 aa).

The segment at 1 to 20 is disordered; sequence MNSGLTPSPSPAVAAAGPAG. Low complexity predominate over residues 11–20; it reads PAVAAAGPAG. A C3H1-type zinc finger spans residues 23-51; the sequence is GSKLKFCRYYAKDRTCFYGDECQFLHDDQ. 3 disordered regions span residues 131–162, 179–210, and 226–291; these read EATYPRMQQRMTNSSSSPSLLNDSAKPYAAHD, TMSQRRKTPNPTASEFIPKGGSTSRLSNMSQS, and GGPT…PPST. Composition is skewed to low complexity over residues 143-154 and 200-210; these read NSSSSPSLLNDS and STSRLSNMSQS. The short motif at 185 to 200 is the PABPC-interacting motif-2 (PAM-2) element; sequence KTPNPTASEFIPKGGS. Residues 265-290 show a composition bias toward polar residues; the sequence is TPNPANYMVPTSASTPVTNSVSQPPS. The segment at 365-650 is pseudokinase domain; sequence QIDQADMPGV…SVNDIMPMIG (286 aa). ATP is bound by residues R422, 471 to 478, and 545 to 546; these read DFHAGSET and TK. Residues 651–689 are a coiled coil; the sequence is ARFYTQLDAAQMRNDVIEEDLAKEVQNGRLFRLLAKLGT. The interval 690 to 787 is knob domain; sequence INERPEFQKD…ELVAAANGQL (98 aa).

Belongs to the protein kinase superfamily. PAN3 family. As to quaternary structure, homodimer. Forms a heterotrimer with a catalytic subunit pan2 to form the poly(A)-nuclease (PAN) deadenylation complex. Interacts (via PAM-2 motif) with poly(A)-binding protein pabpc1 (via PABC domain), conferring substrate specificity of the enzyme complex. Interacts with the GW182 family proteins tnrc6a, tnrc6b and tnrc6c.

It is found in the cytoplasm. The protein resides in the P-body. Functionally, regulatory subunit of the poly(A)-nuclease (PAN) deadenylation complex, one of two cytoplasmic mRNA deadenylases involved in general and miRNA-mediated mRNA turnover. PAN specifically shortens poly(A) tails of RNA and the activity is stimulated by poly(A)-binding protein (PABP). PAN deadenylation is followed by rapid degradation of the shortened mRNA tails by the CCR4-NOT complex. Deadenylated mRNAs are then degraded by two alternative mechanisms, namely exosome-mediated 3'-5' exonucleolytic degradation, or deadenylation-dependent mRNA decaping and subsequent 5'-3' exonucleolytic degradation by XRN1. PAN3 acts as a positive regulator for PAN activity, recruiting the catalytic subunit PAN2 to mRNA via its interaction with RNA and PABP, and to miRNA targets via its interaction with GW182 family proteins. This Xenopus tropicalis (Western clawed frog) protein is PAN2-PAN3 deadenylation complex subunit pan3.